Consider the following 263-residue polypeptide: Phosphoinositide-3-kinase-interacting protein 1 (263 aa).

The first 18 residues, 1 to 18 (MFGRLYFMLLLSVGLVDC), serve as a signal peptide directing secretion. Residues 19–163 (LSVVKDCITN…SGPKKKKDLG (145 aa)) are Extracellular-facing. Residues 24 to 99 (DCITNNGEDY…KKEACDIRIC (76 aa)) enclose the Kringle domain. 3 disulfides stabilise this stretch: Cys-25–Cys-99, Cys-46–Cys-80, and Cys-69–Cys-94. N-linked (GlcNAc...) asparagine glycosylation occurs at Asn-103. A helical membrane pass occupies residues 164 to 184 (TLGYVLAVFMMAIIILLGGGI). At 185–263 (TMGYFYKRGR…LMGSAGTPGA (79 aa)) the chain is on the cytoplasmic side. Residues 239-263 (NNQTPTQEPVEGADPLMGSAGTPGA) are disordered.

It localises to the cell membrane. Functionally, negative regulator of hepatic phosphatidylinositol 3-kinase (PI3K) activity. In Danio rerio (Zebrafish), this protein is Phosphoinositide-3-kinase-interacting protein 1 (pik3ip1).